The following is a 338-amino-acid chain: Anthranilate phosphoribosyltransferase (338 aa).

Residues glycine 81, 84-85 (GD), threonine 89, 91-94 (NIST), 109-117 (KHGNRNLSS), and alanine 121 each bind 5-phospho-alpha-D-ribose 1-diphosphate. Glycine 81 is a binding site for anthranilate. Residue serine 93 coordinates Mg(2+). Anthranilate is bound at residue asparagine 112. Position 167 (arginine 167) interacts with anthranilate. Residues aspartate 226 and glutamate 227 each contribute to the Mg(2+) site.

It belongs to the anthranilate phosphoribosyltransferase family. Homodimer. Mg(2+) is required as a cofactor.

It catalyses the reaction N-(5-phospho-beta-D-ribosyl)anthranilate + diphosphate = 5-phospho-alpha-D-ribose 1-diphosphate + anthranilate. The protein operates within amino-acid biosynthesis; L-tryptophan biosynthesis; L-tryptophan from chorismate: step 2/5. Its function is as follows. Catalyzes the transfer of the phosphoribosyl group of 5-phosphorylribose-1-pyrophosphate (PRPP) to anthranilate to yield N-(5'-phosphoribosyl)-anthranilate (PRA). The sequence is that of Anthranilate phosphoribosyltransferase from Cereibacter sphaeroides (strain ATCC 17029 / ATH 2.4.9) (Rhodobacter sphaeroides).